The chain runs to 321 residues: Ornithine carbamoyltransferase (321 aa).

Carbamoyl phosphate-binding positions include 53–56 (STRT), glutamine 80, arginine 104, and 131–134 (HPCQ). L-ornithine contacts are provided by residues asparagine 166, aspartate 230, and 234-235 (SM). Residues 270 to 271 (CL) and arginine 298 each bind carbamoyl phosphate.

It belongs to the aspartate/ornithine carbamoyltransferase superfamily. OTCase family.

The protein localises to the cytoplasm. The catalysed reaction is carbamoyl phosphate + L-ornithine = L-citrulline + phosphate + H(+). It participates in amino-acid biosynthesis; L-arginine biosynthesis; L-arginine from L-ornithine and carbamoyl phosphate: step 1/3. Reversibly catalyzes the transfer of the carbamoyl group from carbamoyl phosphate (CP) to the N(epsilon) atom of ornithine (ORN) to produce L-citrulline. The chain is Ornithine carbamoyltransferase from Bifidobacterium longum (strain NCC 2705).